The primary structure comprises 234 residues: 2,3,4,5-tetrahydropyridine-2,6-dicarboxylate N-acetyltransferase (234 aa).

It belongs to the transferase hexapeptide repeat family. DapH subfamily.

It carries out the reaction (S)-2,3,4,5-tetrahydrodipicolinate + acetyl-CoA + H2O = L-2-acetamido-6-oxoheptanedioate + CoA. It participates in amino-acid biosynthesis; L-lysine biosynthesis via DAP pathway; LL-2,6-diaminopimelate from (S)-tetrahydrodipicolinate (acetylase route): step 1/3. Functionally, catalyzes the transfer of an acetyl group from acetyl-CoA to tetrahydrodipicolinate. The protein is 2,3,4,5-tetrahydropyridine-2,6-dicarboxylate N-acetyltransferase of Leuconostoc citreum (strain KM20).